The following is a 241-amino-acid chain: Demethylmenaquinone methyltransferase (241 aa).

S-adenosyl-L-methionine-binding positions include Thr-60, Asp-81, and 106 to 107; that span reads DA.

The protein belongs to the class I-like SAM-binding methyltransferase superfamily. MenG/UbiE family.

The enzyme catalyses a 2-demethylmenaquinol + S-adenosyl-L-methionine = a menaquinol + S-adenosyl-L-homocysteine + H(+). It participates in quinol/quinone metabolism; menaquinone biosynthesis; menaquinol from 1,4-dihydroxy-2-naphthoate: step 2/2. Its function is as follows. Methyltransferase required for the conversion of demethylmenaquinol (DMKH2) to menaquinol (MKH2). This chain is Demethylmenaquinone methyltransferase, found in Staphylococcus carnosus (strain TM300).